The chain runs to 174 residues: Endoribonuclease YbeY (174 aa).

Zn(2+) is bound by residues histidine 124, histidine 128, and histidine 134.

The protein belongs to the endoribonuclease YbeY family. It depends on Zn(2+) as a cofactor.

It localises to the cytoplasm. In terms of biological role, single strand-specific metallo-endoribonuclease involved in late-stage 70S ribosome quality control and in maturation of the 3' terminus of the 16S rRNA. In Synechococcus elongatus (strain ATCC 33912 / PCC 7942 / FACHB-805) (Anacystis nidulans R2), this protein is Endoribonuclease YbeY.